The sequence spans 101 residues: Small ribosomal subunit protein bS18c (101 aa).

The protein belongs to the bacterial ribosomal protein bS18 family. As to quaternary structure, part of the 30S ribosomal subunit.

The protein localises to the plastid. It localises to the chloroplast. This chain is Small ribosomal subunit protein bS18c, found in Lactuca sativa (Garden lettuce).